Here is a 104-residue protein sequence, read N- to C-terminus: Small ribosomal subunit protein bS18c (104 aa).

The protein belongs to the bacterial ribosomal protein bS18 family. Part of the 30S ribosomal subunit.

The protein resides in the plastid. It is found in the chloroplast. This Lotus japonicus (Lotus corniculatus var. japonicus) protein is Small ribosomal subunit protein bS18c.